A 444-amino-acid chain; its full sequence is Transcriptional regulatory protein GlrR (444 aa).

Residues 7–121 form the Response regulatory domain; sequence HLLLVDDDPG…ALYQAIDDAL (115 aa). The residue at position 56 (D56) is a 4-aspartylphosphate. Residues 136–366 enclose the Sigma-54 factor interaction domain; that stretch reads IVTRSPLMLR…VNVIEQCVAL (231 aa). ATP is bound by residues 164–171 and 227–236; these read GQSGTGKE and AEGGTLFLDE. A DNA-binding region (H-T-H motif) is located at residues 414–433; sequence VTHAARMAGRNRTEFYKLLS.

Post-translationally, phosphorylated by GlrK.

The protein resides in the cytoplasm. In terms of biological role, member of the two-component regulatory system GlrR/GlrK that up-regulates transcription of the glmY sRNA when cells enter the stationary growth phase. Regulates glmY transcription by binding to three conserved sites in the purL-glmY intergenic region. The protein is Transcriptional regulatory protein GlrR (glrR) of Escherichia coli (strain K12).